The chain runs to 724 residues: MTMFNKVVKEFQWGGHKVRMETGEIARQASGAVLLDMDDTVVLATVVGAKNPKPGQDFFPLTVDYLEKTYAAGKIPGGFFKREGRPSENETLTSRLIDRPLRPLFPEGFYNEVQVVIHVLSINPEVPADIPALVAASAALAVSGLPFNGPVGAARVGYKDGQYLLNPNRAQLAHSDLDLVVAGTERAVLMVESEAQQLSEEIMLGAVVYGHEQMQIAINAIHDLVRDGGKPEWDWQAAPKNEALVAKVSELGLADLQAAYQLRQKSARSQKLKEVYKSVAAKLAEAGVEADGVEVDNILFELESKIVRGQILNGEPRIDGRDTRTVRPIEIRSSVLPRAHGSSLFTRGETQALVVAALGTKSDEQIIDALQGEYRDRFMLHYNMPPFATGETGRVGSPKRREVGHGRLAKRALIPVLPPADEFGYTIRLVSEITESNGSSSMASVCGGSLALMDAGVPIKAHVAGVAMGLILEDNKFAVLTDILGDEDHLGDMDFKVAGTDAGITALQMDIKVQGITKEIMQVALAQAKEGRLHILGKMQAAMGGARTELSEHAPRMITVKINPEKIRDVIGKGGSTIQALTKETGCTIDIGEDGTITIASTSSEGMAEAKRRIEGITAEAEVGKIYNGTVLKLLDFGAIVNILPGKDGLLHISEIANERVNQVSDYVKEGQAVRVKLLSTDEKGRMRLSIKAAKAEEGDVPVAAPQAPGAGDAASQQQQQQQQ.

2 residues coordinate Mg(2+): aspartate 488 and aspartate 494. A KH domain is found at proline 555–isoleucine 614. In terms of domain architecture, S1 motif spans glycine 624–lysine 692. The segment at glutamate 697–glutamine 724 is disordered. A compositionally biased stretch (low complexity) spans valine 701 to glutamine 724.

Belongs to the polyribonucleotide nucleotidyltransferase family. Mg(2+) serves as cofactor.

It localises to the cytoplasm. The catalysed reaction is RNA(n+1) + phosphate = RNA(n) + a ribonucleoside 5'-diphosphate. Involved in mRNA degradation. Catalyzes the phosphorolysis of single-stranded polyribonucleotides processively in the 3'- to 5'-direction. The sequence is that of Polyribonucleotide nucleotidyltransferase from Ralstonia pickettii (strain 12J).